The primary structure comprises 248 residues: 2,3-bisphosphoglycerate-dependent phosphoglycerate mutase 2 (248 aa).

Residues 8–15, 21–22, R60, 87–90, K98, 114–115, and 183–184 each bind substrate; these read RHGESAWN, TG, EKHY, RR, and GN. H9 functions as the Tele-phosphohistidine intermediate in the catalytic mechanism. The active-site Proton donor/acceptor is the E87.

It belongs to the phosphoglycerate mutase family. BPG-dependent PGAM subfamily.

It carries out the reaction (2R)-2-phosphoglycerate = (2R)-3-phosphoglycerate. It participates in carbohydrate degradation; glycolysis; pyruvate from D-glyceraldehyde 3-phosphate: step 3/5. In terms of biological role, catalyzes the interconversion of 2-phosphoglycerate and 3-phosphoglycerate. The chain is 2,3-bisphosphoglycerate-dependent phosphoglycerate mutase 2 from Bacteroides thetaiotaomicron (strain ATCC 29148 / DSM 2079 / JCM 5827 / CCUG 10774 / NCTC 10582 / VPI-5482 / E50).